The chain runs to 243 residues: DNA repair protein RecO (243 aa).

This sequence belongs to the RecO family.

In terms of biological role, involved in DNA repair and RecF pathway recombination. The chain is DNA repair protein RecO from Caulobacter sp. (strain K31).